The chain runs to 73 residues: Mitofissin (73 aa).

Belongs to the ?ATG44? family. Homooligomer. Found as homooctamer in solution, but binds to membranes either as a monomer, dimer, or tetramer, not as an octamer.

Its subcellular location is the mitochondrion intermembrane space. It localises to the vacuole. Mitochondrial fission factor that acts directly on lipid membranes to drive mitochondrial fission required for mitophagy. Directly binds to lipid membranes and brings about lipid membrane fragility to facilitate membrane fission and engulfment of mitochondria by the phagophore. The protein is Mitofissin of Saccharomyces cerevisiae (strain ATCC 204508 / S288c) (Baker's yeast).